The sequence spans 103 residues: Nucleoid-associated protein Anae109_3761 (103 aa).

It belongs to the YbaB/EbfC family. Homodimer.

It is found in the cytoplasm. It localises to the nucleoid. In terms of biological role, binds to DNA and alters its conformation. May be involved in regulation of gene expression, nucleoid organization and DNA protection. In Anaeromyxobacter sp. (strain Fw109-5), this protein is Nucleoid-associated protein Anae109_3761.